The sequence spans 577 residues: E3 ubiquitin-protein ligase MSL2 (577 aa).

The interval 1-116 (MNPVNATALY…CEYITQTTLA (116 aa)) is sufficient for interaction with MSL1. Residues C44, C47, C62, H64, C67, C70, C81, and C84 each contribute to the Zn(2+) site. An RING-type zinc finger spans residues 44-85 (CCVCGHLLQDPIAPTNSTCQHYVCKTCKGKKMMMKPSCSWCK). Residue K375 forms a Glycyl lysine isopeptide (Lys-Gly) (interchain with G-Cter in SUMO2) linkage. The tract at residues 405–428 (TKSMKKSHEHGSKKSHSKSKPGIL) is disordered. Over residues 407–423 (SMKKSHEHGSKKSHSKS) the composition is skewed to basic residues. S447 is modified (phosphoserine). A CXC MSL2-type domain is found at 457–508 (QEKKGCKCGRATQNPSVLTCRGQRCPCYSNRKACLDCICRGCQNSYMANGEK). Zn(2+)-binding residues include C462, C464, C476, C481, C483, C490, C493, C495, and C498.

This sequence belongs to the MSL2 family. As to quaternary structure, component of a multisubunit histone acetyltransferase complex (MSL) at least composed of the KAT8/MOF/MYST1, MSL1/hampin, MSL2 and MSL3. Forms a MSL heterotetrameric core with MSL1.

Its subcellular location is the nucleus. The protein localises to the chromosome. The catalysed reaction is S-ubiquitinyl-[E2 ubiquitin-conjugating enzyme]-L-cysteine + [acceptor protein]-L-lysine = [E2 ubiquitin-conjugating enzyme]-L-cysteine + N(6)-ubiquitinyl-[acceptor protein]-L-lysine.. It functions in the pathway protein modification; protein ubiquitination. Functionally, non-catalytic component of the MSL histone acetyltransferase complex, a multiprotein complex that mediates the majority of histone H4 acetylation at 'Lys-16' (H4K16ac), an epigenetic mark that prevents chromatin compaction. The MSL complex is required for chromosome stability and genome integrity by maintaining homeostatic levels of H4K16ac. The MSL complex is also involved in gene dosage by promoting up-regulation of genes expressed by the X chromosome. X up-regulation is required to compensate for autosomal biallelic expression. The MSL complex also participates in gene dosage compensation by promoting expression of Tsix non-coding RNA. MSL2 plays a key role in gene dosage by ensuring biallelic expression of a subset of dosage-sensitive genes, including many haploinsufficient genes. Acts by promoting promoter-enhancer contacts, thereby preventing DNA methylation of one allele and creating a methylation-free environment for methylation-sensitive transcription factors such as SP1, KANSL1 and KANSL3. Also acts as an E3 ubiquitin ligase that promotes monoubiquitination of histone H2B at 'Lys-35' (H2BK34Ub), but not that of H2A. This activity is greatly enhanced by heterodimerization with MSL1. H2B ubiquitination in turn stimulates histone H3 methylation at 'Lys-4' (H3K4me) and 'Lys-79' (H3K79me) and leads to gene activation, including that of HOXA9 and MEIS1. The protein is E3 ubiquitin-protein ligase MSL2 of Mus musculus (Mouse).